A 67-amino-acid chain; its full sequence is ORF2p protein (67 aa).

The interval 13-18 (WIGHPV) is important for viral replication in intestinal cells. At 22–38 (AIIYPFVGFIPLSLKEV) the chain is embedded in the membrane.

Its subcellular location is the host cytoplasmic vesicle membrane. Functionally, facilitates virus release from intestinal cells in vitro, possibly through the host autophagic pathway. The protein is ORF2p protein of Homo sapiens (Human).